The primary structure comprises 750 residues: Methylmalonyl-CoA mutase, mitochondrial (750 aa).

A mitochondrion-targeting transit peptide spans 1-32 (MLRAKNQLFLLSPHYLRQVKESSGSRLIQQRL). Gln50 contacts malonyl-CoA. An N6-acetyllysine modification is found at Lys89. Residues 96-99 (YPTM) and 106-110 (TIRQY) each bind malonyl-CoA. Lys212 is subject to N6-acetyllysine. Malonyl-CoA is bound by residues 216–218 (TIQ), Arg228, Lys255, His265, and 304–306 (RLS). Residue Lys335 is modified to N6-acetyllysine. Lys343 is subject to N6-succinyllysine. Residue Ser481 is modified to Phosphoserine. Lys595 is subject to N6-succinyllysine. Position 602 is an N6-acetyllysine (Lys602). A B12-binding domain is found at 614–746 (RPRLLVAKMG…DDIEKCLEKK (133 aa)). His627 contacts adenosylcob(III)alamin.

This sequence belongs to the methylmalonyl-CoA mutase family. As to quaternary structure, homodimer. Interacts (the apoenzyme form) with MMAA; the interaction is GTP dependent. Adenosylcob(III)alamin serves as cofactor.

The protein resides in the mitochondrion matrix. It is found in the mitochondrion. The protein localises to the cytoplasm. It carries out the reaction (R)-methylmalonyl-CoA = succinyl-CoA. Its activity is regulated as follows. During catalysis, accumulation of oxidized inactive cofactor hydroxocobalamin (OH2Cbl) leads to loss of MMUT activity. Interaction with MMAA decreases the rate of OH2Cbl formation and promotes the replacement of OH2Cbl by the active cofactor adenosylcobalamin (AdoCbl), thereby restoring MMUT activity. Inhibited by itaconyl-CoA, a metabolite that inactivates the coenzyme B12 cofactor. Inhibited at high concentration of substrate. In terms of biological role, catalyzes the reversible isomerization of methylmalonyl-CoA (MMCoA) (generated from branched-chain amino acid metabolism and degradation of dietary odd chain fatty acids and cholesterol) to succinyl-CoA (3-carboxypropionyl-CoA), a key intermediate of the tricarboxylic acid cycle. In Homo sapiens (Human), this protein is Methylmalonyl-CoA mutase, mitochondrial.